A 175-amino-acid chain; its full sequence is FMRFamide-like neuropeptides 1 (175 aa).

The first 21 residues, Met1–Ala21, serve as a signal peptide directing secretion. Positions Glu22–Lys68 are excised as a propeptide. Tyr76 carries the tyrosine amide modification. A propeptide spanning residues Ser79–Gly86 is cleaved from the precursor. Phenylalanine amide occurs at positions 98, 108, 120, 130, 142, and 154. The propeptide occupies Ser157–Ser165. Phe173 carries the post-translational modification Phenylalanine amide.

It belongs to the FARP (FMRFamide related peptide) family. May be processed by convertase egl-3. As to expression, each flp gene is expressed in a distinct set of neurons. Flp-1 is expressed in the AVA interneurons, the M5 cholinergic pharyngeal motoneurons, and the AIA, AIY, AVE, AVK, RIG and RMG neurons.

It is found in the secreted. Its function is as follows. Together with flp-18, plays a homeostatic role by acting on the GABAergic neural transmission at neuromuscular junctions to prevent overexcitation of the locomotor circuit. Functionally, inhibits the activity of dissected pharyngeal myogenic muscle system. DPNFLRF-amide: Inhibits the activity of dissected pharyngeal myogenic muscle system. In terms of biological role, acts as a ligand for the npr-22 receptor in vitro. The protein is FMRFamide-like neuropeptides 1 (flp-1) of Caenorhabditis elegans.